Here is an 814-residue protein sequence, read N- to C-terminus: DNA gyrase subunit A (814 aa).

The 468-residue stretch at 32–499 (LPDVRDGLKP…GVIEFREEDL (468 aa)) folds into the Topo IIA-type catalytic domain. The active-site O-(5'-phospho-DNA)-tyrosine intermediate is the tyrosine 120. Residues 526 to 532 (QHRAGRG) carry the GyrA-box motif.

It belongs to the type II topoisomerase GyrA/ParC subunit family. As to quaternary structure, heterotetramer, composed of two GyrA and two GyrB chains. In the heterotetramer, GyrA contains the active site tyrosine that forms a transient covalent intermediate with DNA, while GyrB binds cofactors and catalyzes ATP hydrolysis.

It is found in the cytoplasm. It carries out the reaction ATP-dependent breakage, passage and rejoining of double-stranded DNA.. Its function is as follows. A type II topoisomerase that negatively supercoils closed circular double-stranded (ds) DNA in an ATP-dependent manner to modulate DNA topology and maintain chromosomes in an underwound state. Negative supercoiling favors strand separation, and DNA replication, transcription, recombination and repair, all of which involve strand separation. Also able to catalyze the interconversion of other topological isomers of dsDNA rings, including catenanes and knotted rings. Type II topoisomerases break and join 2 DNA strands simultaneously in an ATP-dependent manner. This is DNA gyrase subunit A from Dehalogenimonas lykanthroporepellens (strain ATCC BAA-1523 / JCM 15061 / BL-DC-9).